Here is a 143-residue protein sequence, read N- to C-terminus: Small ribosomal subunit protein uS9A (143 aa).

Serine 2 is modified (N-acetylserine). Residue lysine 30 forms a Glycyl lysine isopeptide (Lys-Gly) (interchain with G-Cter in ubiquitin) linkage. A Phosphoserine modification is found at serine 34. Glycyl lysine isopeptide (Lys-Gly) (interchain with G-Cter in ubiquitin) cross-links involve residues lysine 47 and lysine 59. Phosphoserine is present on serine 61. Threonine 70 carries the post-translational modification Phosphothreonine. A Phosphoserine modification is found at serine 76. Residues 123–143 are disordered; sequence RPEPKKFGGKGARSRFQKSYR. The segment covering 134 to 143 has biased composition (basic residues); it reads ARSRFQKSYR.

The protein belongs to the universal ribosomal protein uS9 family. As to quaternary structure, component of the small ribosomal subunit (SSU). Mature yeast ribosomes consist of a small (40S) and a large (60S) subunit. The 40S small subunit contains 1 molecule of ribosomal RNA (18S rRNA) and 33 different proteins (encoded by 57 genes). The large 60S subunit contains 3 rRNA molecules (25S, 5.8S and 5S rRNA) and 46 different proteins (encoded by 81 genes).

The protein localises to the cytoplasm. Component of the ribosome, a large ribonucleoprotein complex responsible for the synthesis of proteins in the cell. The small ribosomal subunit (SSU) binds messenger RNAs (mRNAs) and translates the encoded message by selecting cognate aminoacyl-transfer RNA (tRNA) molecules. The large subunit (LSU) contains the ribosomal catalytic site termed the peptidyl transferase center (PTC), which catalyzes the formation of peptide bonds, thereby polymerizing the amino acids delivered by tRNAs into a polypeptide chain. The nascent polypeptides leave the ribosome through a tunnel in the LSU and interact with protein factors that function in enzymatic processing, targeting, and the membrane insertion of nascent chains at the exit of the ribosomal tunnel. The sequence is that of Small ribosomal subunit protein uS9A from Saccharomyces cerevisiae (strain ATCC 204508 / S288c) (Baker's yeast).